The following is a 347-amino-acid chain: CDK2-associated and cullin domain-containing protein 1 (347 aa).

Positions 1–11 (MEESMEEEEML) are enriched in acidic residues. 2 disordered regions span residues 1–63 (MEES…LPGG) and 320–347 (RGDQ…RGYR). Residues 34-49 (QPPPAPPLPPPPPPRP) show a composition bias toward pro residues.

The protein belongs to the cullin family. Interacts with CDK2.

Cell cycle associated protein capable of promoting cell proliferation through the activation of CDK2 at the G1/S phase transition. This chain is CDK2-associated and cullin domain-containing protein 1 (Cacul1), found in Rattus norvegicus (Rat).